The primary structure comprises 66 residues: SPbeta prophage-derived uncharacterized protein YopM (66 aa).

The sequence is that of SPbeta prophage-derived uncharacterized protein YopM (yopM) from Bacillus subtilis (strain 168).